A 149-amino-acid chain; its full sequence is MFDIGFTELIVIGIVALVVVGPERLPKVARAAGHLYGRMQRYVSTVRSDISREMQLDEMRRVGQDFKQSVESAASGVEQQASVVDDYLRGEVDMLDKSVRNEPQNAQTPPQTADAEPAQPDVRQQTLPLEEPDQNRAAGEPSSTSTRPA.

Residues 1–21 (MFDIGFTELIVIGIVALVVVG) form a helical membrane-spanning segment. Positions 92–149 (VDMLDKSVRNEPQNAQTPPQTADAEPAQPDVRQQTLPLEEPDQNRAAGEPSSTSTRPA) are disordered. A compositionally biased stretch (polar residues) spans 101 to 111 (NEPQNAQTPPQ).

It belongs to the TatB family. As to quaternary structure, the Tat system comprises two distinct complexes: a TatABC complex, containing multiple copies of TatA, TatB and TatC subunits, and a separate TatA complex, containing only TatA subunits. Substrates initially bind to the TatABC complex, which probably triggers association of the separate TatA complex to form the active translocon.

Its subcellular location is the cell inner membrane. Part of the twin-arginine translocation (Tat) system that transports large folded proteins containing a characteristic twin-arginine motif in their signal peptide across membranes. Together with TatC, TatB is part of a receptor directly interacting with Tat signal peptides. TatB may form an oligomeric binding site that transiently accommodates folded Tat precursor proteins before their translocation. The chain is Sec-independent protein translocase protein TatB from Thiobacillus denitrificans (strain ATCC 25259 / T1).